Consider the following 307-residue polypeptide: Protoheme IX farnesyltransferase (307 aa).

The next 9 helical transmembrane spans lie at 28-48, 50-70, 99-117, 121-138, 146-166, 173-193, 219-239, 241-261, and 278-298; these read LVIF…NPIL, FTAI…NQWW, FGIL…AINW, IILA…TIWL, IVIG…AVTG, VLLF…LALF, ILVY…IGAT, AIYG…SVPV, and LFGF…ADRY.

Belongs to the UbiA prenyltransferase family. Protoheme IX farnesyltransferase subfamily.

The protein localises to the cell inner membrane. It catalyses the reaction heme b + (2E,6E)-farnesyl diphosphate + H2O = Fe(II)-heme o + diphosphate. It functions in the pathway porphyrin-containing compound metabolism; heme O biosynthesis; heme O from protoheme: step 1/1. In terms of biological role, converts heme B (protoheme IX) to heme O by substitution of the vinyl group on carbon 2 of heme B porphyrin ring with a hydroxyethyl farnesyl side group. This chain is Protoheme IX farnesyltransferase, found in Erythrobacter litoralis (strain HTCC2594).